We begin with the raw amino-acid sequence, 57 residues long: UPF0391 membrane protein RPB_2024 (57 aa).

A run of 2 helical transmembrane segments spans residues 4 to 24 (WVVT…GGIA) and 30 to 50 (IAKV…VVGL).

It belongs to the UPF0391 family.

The protein localises to the cell membrane. The protein is UPF0391 membrane protein RPB_2024 of Rhodopseudomonas palustris (strain HaA2).